A 211-amino-acid chain; its full sequence is MHRRSSKSYSSRNSKIPERSKIPDCVIASNKSAEYNYFLDKTFEAGLVLLGSEVKSVRQQKISLSEAYIYEDNSEIWLANLYIPEHKTGGWTNHNPRRLRKLLLHKYQIARLRKDLLIPGITLVPIKFYFRNGRAKLLIALARGKKLIDKREVIKEREATLEANRALKHRLRRPRAQRNTQRSVTPRRTRENKNVRGSKARSARRNVRREN.

Residues 168-211 form a disordered region; the sequence is KHRLRRPRAQRNTQRSVTPRRTRENKNVRGSKARSARRNVRREN. Residues 177–186 are compositionally biased toward polar residues; sequence QRNTQRSVTP. Basic residues predominate over residues 196–211; sequence RGSKARSARRNVRREN.

The protein belongs to the SmpB family.

It localises to the cytoplasm. Functionally, required for rescue of stalled ribosomes mediated by trans-translation. Binds to transfer-messenger RNA (tmRNA), required for stable association of tmRNA with ribosomes. tmRNA and SmpB together mimic tRNA shape, replacing the anticodon stem-loop with SmpB. tmRNA is encoded by the ssrA gene; the 2 termini fold to resemble tRNA(Ala) and it encodes a 'tag peptide', a short internal open reading frame. During trans-translation Ala-aminoacylated tmRNA acts like a tRNA, entering the A-site of stalled ribosomes, displacing the stalled mRNA. The ribosome then switches to translate the ORF on the tmRNA; the nascent peptide is terminated with the 'tag peptide' encoded by the tmRNA and targeted for degradation. The ribosome is freed to recommence translation, which seems to be the essential function of trans-translation. This is SsrA-binding protein from Tropheryma whipplei (strain Twist) (Whipple's bacillus).